The chain runs to 95 residues: Aspartyl/glutamyl-tRNA(Asn/Gln) amidotransferase subunit C (95 aa).

Belongs to the GatC family. Heterotrimer of A, B and C subunits.

It catalyses the reaction L-glutamyl-tRNA(Gln) + L-glutamine + ATP + H2O = L-glutaminyl-tRNA(Gln) + L-glutamate + ADP + phosphate + H(+). It carries out the reaction L-aspartyl-tRNA(Asn) + L-glutamine + ATP + H2O = L-asparaginyl-tRNA(Asn) + L-glutamate + ADP + phosphate + 2 H(+). In terms of biological role, allows the formation of correctly charged Asn-tRNA(Asn) or Gln-tRNA(Gln) through the transamidation of misacylated Asp-tRNA(Asn) or Glu-tRNA(Gln) in organisms which lack either or both of asparaginyl-tRNA or glutaminyl-tRNA synthetases. The reaction takes place in the presence of glutamine and ATP through an activated phospho-Asp-tRNA(Asn) or phospho-Glu-tRNA(Gln). In Azoarcus sp. (strain BH72), this protein is Aspartyl/glutamyl-tRNA(Asn/Gln) amidotransferase subunit C.